The primary structure comprises 453 residues: Ribosomal protein uS12 methylthiotransferase RimO (453 aa).

Residues 5 to 120 (PKVGFVSLGC…VMQAVHSHLP (116 aa)) form the MTTase N-terminal domain. [4Fe-4S] cluster contacts are provided by Cys14, Cys50, Cys79, Cys151, Cys155, and Cys158. A Radical SAM core domain is found at 137-382 (LTPRHYAYLK…MEVAEEVSAN (246 aa)). The region spanning 385-453 (QRKVGKTLKV…ADGHDLWGEV (69 aa)) is the TRAM domain.

This sequence belongs to the methylthiotransferase family. RimO subfamily. [4Fe-4S] cluster serves as cofactor.

The protein resides in the cytoplasm. The catalysed reaction is L-aspartate(89)-[ribosomal protein uS12]-hydrogen + (sulfur carrier)-SH + AH2 + 2 S-adenosyl-L-methionine = 3-methylsulfanyl-L-aspartate(89)-[ribosomal protein uS12]-hydrogen + (sulfur carrier)-H + 5'-deoxyadenosine + L-methionine + A + S-adenosyl-L-homocysteine + 2 H(+). Catalyzes the methylthiolation of an aspartic acid residue of ribosomal protein uS12. The protein is Ribosomal protein uS12 methylthiotransferase RimO of Burkholderia lata (strain ATCC 17760 / DSM 23089 / LMG 22485 / NCIMB 9086 / R18194 / 383).